Reading from the N-terminus, the 243-residue chain is Adenosylcobinamide-GDP ribazoletransferase (243 aa).

Transmembrane regions (helical) follow at residues 31–51 (LLFY…FNAL), 55–75 (APLL…SGGL), 109–129 (IAVV…VALI), 135–155 (IGLL…FLGT), and 188–208 (VVLA…CFYW).

Belongs to the CobS family. Requires Mg(2+) as cofactor.

The protein resides in the cell inner membrane. It carries out the reaction alpha-ribazole + adenosylcob(III)inamide-GDP = adenosylcob(III)alamin + GMP + H(+). It catalyses the reaction alpha-ribazole 5'-phosphate + adenosylcob(III)inamide-GDP = adenosylcob(III)alamin 5'-phosphate + GMP + H(+). The protein operates within cofactor biosynthesis; adenosylcobalamin biosynthesis; adenosylcobalamin from cob(II)yrinate a,c-diamide: step 7/7. Its function is as follows. Joins adenosylcobinamide-GDP and alpha-ribazole to generate adenosylcobalamin (Ado-cobalamin). Also synthesizes adenosylcobalamin 5'-phosphate from adenosylcobinamide-GDP and alpha-ribazole 5'-phosphate. This chain is Adenosylcobinamide-GDP ribazoletransferase, found in Pseudomonas syringae pv. tomato (strain ATCC BAA-871 / DC3000).